Consider the following 504-residue polypeptide: ATP synthase subunit alpha (504 aa).

Residue 171 to 178 (GDRQTGKT) participates in ATP binding.

The protein belongs to the ATPase alpha/beta chains family. As to quaternary structure, F-type ATPases have 2 components, CF(1) - the catalytic core - and CF(0) - the membrane proton channel. CF(1) has five subunits: alpha(3), beta(3), gamma(1), delta(1), epsilon(1). CF(0) has three main subunits: a(1), b(2) and c(9-12). The alpha and beta chains form an alternating ring which encloses part of the gamma chain. CF(1) is attached to CF(0) by a central stalk formed by the gamma and epsilon chains, while a peripheral stalk is formed by the delta and b chains.

It is found in the cell inner membrane. It carries out the reaction ATP + H2O + 4 H(+)(in) = ADP + phosphate + 5 H(+)(out). In terms of biological role, produces ATP from ADP in the presence of a proton gradient across the membrane. The alpha chain is a regulatory subunit. This chain is ATP synthase subunit alpha, found in Helicobacter hepaticus (strain ATCC 51449 / 3B1).